The chain runs to 254 residues: Phosphoribosylaminoimidazole-succinocarboxamide synthase (254 aa).

It belongs to the SAICAR synthetase family.

The enzyme catalyses 5-amino-1-(5-phospho-D-ribosyl)imidazole-4-carboxylate + L-aspartate + ATP = (2S)-2-[5-amino-1-(5-phospho-beta-D-ribosyl)imidazole-4-carboxamido]succinate + ADP + phosphate + 2 H(+). The protein operates within purine metabolism; IMP biosynthesis via de novo pathway; 5-amino-1-(5-phospho-D-ribosyl)imidazole-4-carboxamide from 5-amino-1-(5-phospho-D-ribosyl)imidazole-4-carboxylate: step 1/2. The polypeptide is Phosphoribosylaminoimidazole-succinocarboxamide synthase (Sinorhizobium fredii (strain NBRC 101917 / NGR234)).